Reading from the N-terminus, the 203-residue chain is GTP-binding protein yptV1 (203 aa).

Residues 15–23 (GDSGVGKSC), 33–40 (YTESYIST), 63–67 (DTAGQ), 121–124 (NKSD), and 151–153 (SAK) each bind GTP. An Effector region motif is present at residues 37 to 45 (YISTIGVDF). Positions 173–203 (MASQPVPPKPGGPVVRPTEGKPINNKSSSCC) are disordered. Residues Cys-202 and Cys-203 are each lipidated (S-geranylgeranyl cysteine).

The protein belongs to the small GTPase superfamily. Rab family.

Its subcellular location is the cell membrane. Protein transport. Probably involved in vesicular traffic. The chain is GTP-binding protein yptV1 (YPTV1) from Volvox carteri (Green alga).